Here is a 247-residue protein sequence, read N- to C-terminus: Pleckstrin homology domain-containing family F member 2 (247 aa).

The region spanning 35 to 131 (VLIGEGVLTK…WMSHINKCVS (97 aa)) is the PH domain. The FYVE-type zinc-finger motif lies at 152–212 (DSEATVCMRC…VCEFCYKQLS (61 aa)). Cysteine 158, cysteine 161, cysteine 175, cysteine 178, cysteine 183, cysteine 186, cysteine 204, and cysteine 207 together coordinate Zn(2+). Positions 213–247 (TGATLPPRSDSYSRQGSDFGSNNISDDDDDDDSSD) are disordered. The segment covering 222–236 (DSYSRQGSDFGSNNI) has biased composition (polar residues). Positions 237–247 (SDDDDDDDSSD) are enriched in acidic residues.

The protein resides in the early endosome membrane. It is found in the endoplasmic reticulum. May play a role in early endosome fusion upstream of RAB5, hence regulating receptor trafficking and fluid-phase transport. Enhances cellular sensitivity to TNF-induced apoptosis. This is Pleckstrin homology domain-containing family F member 2 (plekhf2) from Danio rerio (Zebrafish).